The chain runs to 193 residues: Cilia- and flagella-associated protein 20 (193 aa).

Belongs to the CFAP20 family. Microtubule inner protein component of sperm flagellar doublet microtubules.

Its subcellular location is the nucleus. It is found in the cytoplasm. It localises to the cytoskeleton. The protein localises to the microtubule organizing center. The protein resides in the centrosome. Its subcellular location is the centriole. It is found in the cilium basal body. It localises to the cilium axoneme. The protein localises to the flagellum axoneme. Functionally, cilium- and flagellum-specific protein that plays a role in axonemal structure organization and motility. Microtubule inner protein (MIP) part of the dynein-decorated doublet microtubules (DMTs) in cilia axoneme, which is required for motile cilia beating. Involved in the regulation of the size and morphology of cilia. Required for axonemal microtubules polyglutamylation. This is Cilia- and flagella-associated protein 20 from Homo sapiens (Human).